Consider the following 147-residue polypeptide: Large ribosomal subunit protein uL13 (147 aa).

Residues 126–147 form a disordered region; sequence AGPTHPHQAQQPVPYEIKQVAQ.

It belongs to the universal ribosomal protein uL13 family. In terms of assembly, part of the 50S ribosomal subunit.

Its function is as follows. This protein is one of the early assembly proteins of the 50S ribosomal subunit, although it is not seen to bind rRNA by itself. It is important during the early stages of 50S assembly. This is Large ribosomal subunit protein uL13 from Parafrankia sp. (strain EAN1pec).